The following is a 1177-amino-acid chain: DNA-directed RNA polymerase subunit beta (1177 aa).

Acidic residues predominate over residues 1147–1161 (DDTEIEMRDTEDDDD). Residues 1147-1177 (DDTEIEMRDTEDDDDHQSADKLNVEVETTKE) form a disordered region. The span at 1162–1177 (HQSADKLNVEVETTKE) shows a compositional bias: basic and acidic residues.

It belongs to the RNA polymerase beta chain family. The RNAP catalytic core consists of 2 alpha, 1 beta, 1 beta' and 1 omega subunit. When a sigma factor is associated with the core the holoenzyme is formed, which can initiate transcription.

The catalysed reaction is RNA(n) + a ribonucleoside 5'-triphosphate = RNA(n+1) + diphosphate. In terms of biological role, DNA-dependent RNA polymerase catalyzes the transcription of DNA into RNA using the four ribonucleoside triphosphates as substrates. This is DNA-directed RNA polymerase subunit beta from Bacillus cereus (strain G9842).